Here is a 594-residue protein sequence, read N- to C-terminus: Homeobox protein prospero homolog 1 (594 aa).

Polar residues-rich tracts occupy residues 1–13 (MSSG…ATAQ) and 36–50 (PPVN…SSNR). Disordered regions lie at residues 1 to 20 (MSSG…NGFS), 30 to 180 (IYYS…FQPQ), and 358 to 389 (DTSS…SASA). The span at 73 to 101 (STSVSSNSSSSSSTSNTNSTPSSSSTSSK) shows a compositional bias: low complexity. Positions 105-117 (EGMTETETMTASI) are enriched in polar residues. The span at 118–135 (EQEKVIQNEESEAGKDGM) shows a compositional bias: basic and acidic residues. The segment covering 136 to 162 (EEHDDGMNDFEIIDDTNDEVEESEERE) has biased composition (acidic residues). Over residues 369 to 378 (KVEIKKEDAM) the composition is skewed to basic and acidic residues. The span at 379–389 (SSRASPLSASA) shows a compositional bias: low complexity. The Prospero-type homeo domain occupies 435–493 (SSMLTPMHLRKAKLMFFYTRYPNSNLLKSYFPDIRFNKNNTAQLVKWFSNFREFYYNQM). Residues 435-593 (SSMLTPMHLR…KEPNFLERLE (159 aa)) are homeo-Prospero. Residues 494–593 (EKFARQALAE…KEPNFLERLE (100 aa)) form the Prospero domain.

This sequence belongs to the Prospero homeodomain family.

The protein resides in the nucleus. In terms of biological role, transcription factor involved in developmental processes. Controls the transcription of genes required for excretory canal formation. The polypeptide is Homeobox protein prospero homolog 1 (Caenorhabditis elegans).